We begin with the raw amino-acid sequence, 491 residues long: Monocarboxylate transport permease protein (491 aa).

13 consecutive transmembrane segments (helical) span residues 7-27, 55-75, 83-103, 130-150, 157-177, 187-207, 246-266, 277-297, 322-342, 374-396, 400-422, 427-447, and 465-485; these read GTALAVFIFFFVLVTVMGFVA, WFLVGGDFYTAYTVIAVPALV, FFALPYTIVVYPFVFMVMPVL, LAVAATGVIATMPYIALQLVG, ALGLHGELPLAIAFIVLALYT, LIAFVKDIMIYIVVIAAVALI, LALGSALAAFMYPHTLTGIFA, AIMLPAYTLLLGLLALLGYMG, WFSGFAFAAIAIGALVPAAVM, ITSLVVKVGALLVIIFLPTQFAL, LLGGIWILQTLPALVFGLYTNWF, LLAGWFVGFGGGTFLVWDAGW, and GLLALAANIAVAVVVNALLPA.

The protein belongs to the sodium:solute symporter (SSF) (TC 2.A.21) family.

The protein localises to the cell membrane. Its activity is regulated as follows. Inhibited by CCCP, but is apparently not affected by the concentration of sodium. Low-affinity transporter of alanine and high-affinity transporter of lactate and pyruvate. Can also transport other monocarboxylates such as propionate, butyrate, alpha-hydroxybutyrate or acetate. May be proton coupled. Required for optimal growth on alanine or pyruvate and ammonia. The protein is Monocarboxylate transport permease protein of Rhizobium johnstonii (strain DSM 114642 / LMG 32736 / 3841) (Rhizobium leguminosarum bv. viciae).